A 271-amino-acid polypeptide reads, in one-letter code: Ribosomal RNA small subunit methyltransferase A (271 aa).

Residues Asn18, Leu20, Gly45, Glu66, Asp91, and Asn112 each coordinate S-adenosyl-L-methionine.

It belongs to the class I-like SAM-binding methyltransferase superfamily. rRNA adenine N(6)-methyltransferase family. RsmA subfamily.

Its subcellular location is the cytoplasm. It carries out the reaction adenosine(1518)/adenosine(1519) in 16S rRNA + 4 S-adenosyl-L-methionine = N(6)-dimethyladenosine(1518)/N(6)-dimethyladenosine(1519) in 16S rRNA + 4 S-adenosyl-L-homocysteine + 4 H(+). Its function is as follows. Specifically dimethylates two adjacent adenosines (A1518 and A1519) in the loop of a conserved hairpin near the 3'-end of 16S rRNA in the 30S particle. May play a critical role in biogenesis of 30S subunits. The polypeptide is Ribosomal RNA small subunit methyltransferase A (Vibrio atlanticus (strain LGP32) (Vibrio splendidus (strain Mel32))).